The chain runs to 159 residues: Nucleotide-binding protein PST_3153 (159 aa).

This sequence belongs to the YajQ family.

Its function is as follows. Nucleotide-binding protein. The chain is Nucleotide-binding protein PST_3153 from Stutzerimonas stutzeri (strain A1501) (Pseudomonas stutzeri).